The sequence spans 273 residues: 4-hydroxy-tetrahydrodipicolinate reductase (273 aa).

Residues 12 to 17 and E38 contribute to the NAD(+) site; that span reads GAGGRM. Position 39 (R39) interacts with NADP(+). NAD(+)-binding positions include 102-104 and 126-129; these read GTT and AANF. The active-site Proton donor/acceptor is the H159. (S)-2,3,4,5-tetrahydrodipicolinate is bound at residue H160. The Proton donor role is filled by K163. 169–170 lines the (S)-2,3,4,5-tetrahydrodipicolinate pocket; it reads GT.

Belongs to the DapB family. As to quaternary structure, homotetramer.

It localises to the cytoplasm. The enzyme catalyses (S)-2,3,4,5-tetrahydrodipicolinate + NAD(+) + H2O = (2S,4S)-4-hydroxy-2,3,4,5-tetrahydrodipicolinate + NADH + H(+). It carries out the reaction (S)-2,3,4,5-tetrahydrodipicolinate + NADP(+) + H2O = (2S,4S)-4-hydroxy-2,3,4,5-tetrahydrodipicolinate + NADPH + H(+). The protein operates within amino-acid biosynthesis; L-lysine biosynthesis via DAP pathway; (S)-tetrahydrodipicolinate from L-aspartate: step 4/4. Its function is as follows. Catalyzes the conversion of 4-hydroxy-tetrahydrodipicolinate (HTPA) to tetrahydrodipicolinate. The chain is 4-hydroxy-tetrahydrodipicolinate reductase from Escherichia coli O157:H7.